The following is a 273-amino-acid chain: Petrobactin import ATP-binding protein FpuD (273 aa).

An ABC transporter domain is found at Leu-5 to Glu-241. Gly-37–Ser-44 is a binding site for ATP.

This sequence belongs to the ABC transporter superfamily. The complex is composed of two ATP-binding proteins (FpuD), two transmembrane proteins (FpuB) and a solute-binding protein (FpuA).

The protein localises to the cell membrane. The enzyme catalyses a Fe(III)-siderophore(out) + ATP + H2O = a Fe(III)-siderophore(in) + ADP + phosphate + H(+). In terms of biological role, part of an ABC transporter complex involved in ferric-petrobactin uptake. Probably responsible for energy coupling to the transport system. The protein is Petrobactin import ATP-binding protein FpuD of Bacillus anthracis.